The sequence spans 545 residues: Glucose-6-phosphate isomerase (545 aa).

Catalysis depends on Glu-351, which acts as the Proton donor. Residues His-382 and Lys-510 contribute to the active site.

The protein belongs to the GPI family.

The protein resides in the cytoplasm. The catalysed reaction is alpha-D-glucose 6-phosphate = beta-D-fructose 6-phosphate. It functions in the pathway carbohydrate biosynthesis; gluconeogenesis. Its pathway is carbohydrate degradation; glycolysis; D-glyceraldehyde 3-phosphate and glycerone phosphate from D-glucose: step 2/4. In terms of biological role, catalyzes the reversible isomerization of glucose-6-phosphate to fructose-6-phosphate. The protein is Glucose-6-phosphate isomerase of Helicobacter pylori (strain J99 / ATCC 700824) (Campylobacter pylori J99).